A 191-amino-acid polypeptide reads, in one-letter code: Elongation factor P 1 (191 aa).

Belongs to the elongation factor P family.

Its subcellular location is the cytoplasm. Its pathway is protein biosynthesis; polypeptide chain elongation. In terms of biological role, involved in peptide bond synthesis. Stimulates efficient translation and peptide-bond synthesis on native or reconstituted 70S ribosomes in vitro. Probably functions indirectly by altering the affinity of the ribosome for aminoacyl-tRNA, thus increasing their reactivity as acceptors for peptidyl transferase. The protein is Elongation factor P 1 of Lactobacillus acidophilus (strain ATCC 700396 / NCK56 / N2 / NCFM).